The sequence spans 474 residues: tRNA-2-methylthio-N(6)-dimethylallyladenosine synthase (474 aa).

Residues 3 to 120 form the MTTase N-terminal domain; the sequence is QKLHIKTWGC…LPEMINQIRG (118 aa). The [4Fe-4S] cluster site is built by Cys12, Cys49, Cys83, Cys157, Cys161, and Cys164. The region spanning 143 to 375 is the Radical SAM core domain; it reads RAEGPTAFVS…QERINQQAAQ (233 aa). In terms of domain architecture, TRAM spans 378-441; it reads RRMLGTEQRV…TNSLRGEVVR (64 aa).

This sequence belongs to the methylthiotransferase family. MiaB subfamily. Monomer. Requires [4Fe-4S] cluster as cofactor.

Its subcellular location is the cytoplasm. The catalysed reaction is N(6)-dimethylallyladenosine(37) in tRNA + (sulfur carrier)-SH + AH2 + 2 S-adenosyl-L-methionine = 2-methylsulfanyl-N(6)-dimethylallyladenosine(37) in tRNA + (sulfur carrier)-H + 5'-deoxyadenosine + L-methionine + A + S-adenosyl-L-homocysteine + 2 H(+). Functionally, catalyzes the methylthiolation of N6-(dimethylallyl)adenosine (i(6)A), leading to the formation of 2-methylthio-N6-(dimethylallyl)adenosine (ms(2)i(6)A) at position 37 in tRNAs that read codons beginning with uridine. The polypeptide is tRNA-2-methylthio-N(6)-dimethylallyladenosine synthase (Haemophilus influenzae (strain PittEE)).